We begin with the raw amino-acid sequence, 1233 residues long: Pesticidal crystal protein Cry1Bc (1233 aa).

This sequence belongs to the delta endotoxin family.

Functionally, promotes colloidosmotic lysis by binding to the midgut epithelial cells of insects. The protein is Pesticidal crystal protein Cry1Bc (cry1Bc) of Bacillus thuringiensis subsp. morrisoni.